The primary structure comprises 563 residues: MDTKTLIASEIAKVVPELEQDAIFNLLETPKNSDMGDLAFPAFSLAKVLRKAPQMIASELAEQIDESQFEKVVAVGPYINFFLDKAKISSQVLEQVITAGSDYAQQDEGQGRNVAIDMSSPNIAKPFSIGHLRSTVIGDSLAHIFAKMGYKPVKINHLGDWGKQFGMLIVAYKKWGDEAAVQAHPIDELLKLYVRINAEAETDPTVDEEAREWFRKLEDGDKEATELWQWFRDESLLEFNRLYDQLHVTFDSYNGEAFYNDKMDEVLDLLEAKNLLVESKGAQVVNLEKYGIEHPALIKKSDGATLYITRDLAAALYRKRTYDFAKSVYVVGNEQAAHFKQLKAVLKEMGYDWSDDMTHVAFGLVTKGGAKLSTRKGNVILLEPTVAEAINRAASQIEAKNPNLADKEAVAHAVGVGAIKFYDLKTDRMNGYDFDLEAMVSFEGETGPYVQYAHARIQSILRKADFTPSATTTYSLADAESWEIIKLIQDFPRIIKRTSDNFEPSIMAKFAINLAQSFNKYYAHTRILDDNSERDNRLALCYATATVLKEALRLLGVDAPNEM.

The 'HIGH' region motif lies at 121–131 (PNIAKPFSIGH).

The protein belongs to the class-I aminoacyl-tRNA synthetase family. Monomer.

Its subcellular location is the cytoplasm. The catalysed reaction is tRNA(Arg) + L-arginine + ATP = L-arginyl-tRNA(Arg) + AMP + diphosphate. The chain is Arginine--tRNA ligase from Streptococcus pyogenes serotype M1.